A 428-amino-acid chain; its full sequence is Histidinol dehydrogenase (428 aa).

The NAD(+) site is built by Tyr126, Gln188, and Asn211. Substrate is bound by residues Ser234, Gln256, and His259. Zn(2+)-binding residues include Gln256 and His259. Active-site proton acceptor residues include Glu324 and His325. Substrate contacts are provided by His325, Asp358, Glu412, and His417. Position 358 (Asp358) interacts with Zn(2+). His417 is a Zn(2+) binding site.

This sequence belongs to the histidinol dehydrogenase family. The cofactor is Zn(2+).

It catalyses the reaction L-histidinol + 2 NAD(+) + H2O = L-histidine + 2 NADH + 3 H(+). Its pathway is amino-acid biosynthesis; L-histidine biosynthesis; L-histidine from 5-phospho-alpha-D-ribose 1-diphosphate: step 9/9. Catalyzes the sequential NAD-dependent oxidations of L-histidinol to L-histidinaldehyde and then to L-histidine. The sequence is that of Histidinol dehydrogenase from Chlorobium chlorochromatii (strain CaD3).